A 617-amino-acid chain; its full sequence is BPI fold-containing family B member 4 (617 aa).

Residues 1–17 form the signal peptide; that stretch reads MWTAWCVAALSVAAVCG. The tract at residues 124-149 is disordered; sequence RPSDSAYHRGPGRYRSAADPSSAGRL. N275 carries an N-linked (GlcNAc...) asparagine glycan. C297 and C334 are oxidised to a cystine.

This sequence belongs to the BPI/LBP/Plunc superfamily. BPI/LBP family. As to expression, highly expressed in olfactory mucosa but undetectable in thymus, kidney, lung, brain, spleen and liver.

The protein resides in the secreted. It is found in the cytoplasm. May have the capacity to recognize and bind specific classes of odorants. May act as a carrier molecule, transporting odorants across the mucus layer to access receptor sites. May serve as a primary defense mechanism by recognizing and removing potentially harmful odorants or pathogenic microorganisms from the mucosa or clearing excess odorant from mucus to enable new odorant stimuli to be received. In Rattus norvegicus (Rat), this protein is BPI fold-containing family B member 4 (Bpifb4).